A 161-amino-acid polypeptide reads, in one-letter code: SsrA-binding protein (161 aa).

This sequence belongs to the SmpB family.

It is found in the cytoplasm. Its function is as follows. Required for rescue of stalled ribosomes mediated by trans-translation. Binds to transfer-messenger RNA (tmRNA), required for stable association of tmRNA with ribosomes. tmRNA and SmpB together mimic tRNA shape, replacing the anticodon stem-loop with SmpB. tmRNA is encoded by the ssrA gene; the 2 termini fold to resemble tRNA(Ala) and it encodes a 'tag peptide', a short internal open reading frame. During trans-translation Ala-aminoacylated tmRNA acts like a tRNA, entering the A-site of stalled ribosomes, displacing the stalled mRNA. The ribosome then switches to translate the ORF on the tmRNA; the nascent peptide is terminated with the 'tag peptide' encoded by the tmRNA and targeted for degradation. The ribosome is freed to recommence translation, which seems to be the essential function of trans-translation. This chain is SsrA-binding protein, found in Haemophilus influenzae (strain 86-028NP).